The following is a 432-amino-acid chain: Interleukin-11 receptor subunit alpha-1 (432 aa).

The N-terminal stretch at 1–23 (MSSSCSGLTRVLVAVATALVSSS) is a signal peptide. Over 24–372 (SPCPQAWGPP…DPLEQVAVLA (349 aa)) the chain is Extracellular. The Ig-like C2-type domain occupies 27–110 (PQAWGPPGVQ…SGGMVTLKLG (84 aa)). 3 disulfides stabilise this stretch: Cys-48-Cys-94, Cys-120-Cys-130, and Cys-170-Cys-180. 2 consecutive Fibronectin type-III domains span residues 112-219 (PPAR…LRPD) and 220-317 (PPQG…TPST). The N-linked (GlcNAc...) asparagine glycan is linked to Asn-127. The interval 151–170 (KTLPGAESQRESPSTGPWPC) is disordered. N-linked (GlcNAc...) asparagine glycosylation occurs at Asn-194. The WSXWS motif motif lies at 304 to 308 (WSAWS). Disordered regions lie at residues 309-332 (PEAWGTPSTGPLQDEIPDWSQGHG) and 342-361 (EDSPAPARPSLQPDPRPLDH). Residues 373-393 (SLGIFSCLGLAVGALALGLWL) traverse the membrane as a helical segment. The Cytoplasmic portion of the chain corresponds to 394–432 (RLRRSGKDGPQKPGLLAPMIPVEKLPGIPNLQRTPENFS).

Belongs to the type I cytokine receptor family. Type 3 subfamily. In terms of assembly, on IL11 binding, forms a multimer complex with IL6ST/gp130. In terms of processing, a short soluble form is also released from the membrane by proteolysis. The sIL11RA is formed either by limited proteolysis of membrane-bound receptors, a process referred to as ectodomain shedding, or directly secreted from the cells after alternative mRNA splicing. mIL11RA is cleaved by the proteases ADAM10, ELANE and PRTN3. In terms of tissue distribution, widely expressed in all adult tissues and in embryos. Highest levels in kidney, skeletal muscle and embryo.

The protein localises to the membrane. It localises to the secreted. In terms of biological role, receptor for interleukin-11. The receptor systems for IL6, LIF, OSM, CNTF, IL11 and CT1 can utilize IL6ST for initiating signal transmission. The IL11/IL11RA/IL6ST complex may be involved in the control of proliferation and/or differentiation of skeletogenic progenitor or other mesenchymal cells. Essential for the normal development of craniofacial bones and teeth. Functionally, soluble form of IL11 receptor (sIL11RA) that acts as an agonist of IL11 activity. The IL11:sIL11RA complex binds to IL6ST/gp130 on cell surfaces and induces signaling also on cells that do not express membrane-bound IL11RA in a process called IL11 trans-signaling. The chain is Interleukin-11 receptor subunit alpha-1 from Mus musculus (Mouse).